Reading from the N-terminus, the 367-residue chain is Acryloyl-CoA reductase electron transfer subunit beta (367 aa).

Residue 305-333 participates in FAD binding; the sequence is VYVALGISGAIQHKAGMQDSELIIAVNKD.

In terms of assembly, heterohexadecamer; tetramer of tetramers. Each tetramer is composed of 2 alpha (AcrC), a beta (AcrA) and a gamma (AcrB) subunit.

The protein localises to the cytoplasm. Part of the ETF-acryloyl-CoA reductase complex involved in the pathway of L-alanine fermentation. The electron transfer flavoprotein (ETF) serves as a specific electron acceptor for acryloyl-CoA reductase. The protein is Acryloyl-CoA reductase electron transfer subunit beta (acrA) of Anaerotignum propionicum (Clostridium propionicum).